The sequence spans 59 residues: UPF0509 protein YciZ (59 aa).

It belongs to the UPF0509 family.

This is UPF0509 protein YciZ from Salmonella agona (strain SL483).